We begin with the raw amino-acid sequence, 559 residues long: Small ribosomal subunit protein bS1 (559 aa).

6 consecutive S1 motif domains span residues 21-87 (GAII…LSRE), 105-171 (DEVV…VSRR), 192-260 (GQQV…LGLK), 277-347 (GTRV…LGIK), 364-434 (GDRI…LGIK), and 451-520 (GSIV…LSVK).

The protein belongs to the bacterial ribosomal protein bS1 family.

Binds mRNA; thus facilitating recognition of the initiation point. It is needed to translate mRNA with a short Shine-Dalgarno (SD) purine-rich sequence. In Pseudomonas aeruginosa (strain ATCC 15692 / DSM 22644 / CIP 104116 / JCM 14847 / LMG 12228 / 1C / PRS 101 / PAO1), this protein is Small ribosomal subunit protein bS1 (rpsA).